The primary structure comprises 456 residues: Exodeoxyribonuclease 7 large subunit (456 aa).

This sequence belongs to the XseA family. In terms of assembly, heterooligomer composed of large and small subunits.

Its subcellular location is the cytoplasm. It carries out the reaction Exonucleolytic cleavage in either 5'- to 3'- or 3'- to 5'-direction to yield nucleoside 5'-phosphates.. Its function is as follows. Bidirectionally degrades single-stranded DNA into large acid-insoluble oligonucleotides, which are then degraded further into small acid-soluble oligonucleotides. The chain is Exodeoxyribonuclease 7 large subunit from Escherichia coli O157:H7.